A 201-amino-acid chain; its full sequence is Peroxiredoxin-2F, mitochondrial (201 aa).

The transit peptide at 1–30 (MAMSILKLRNLSALRSAANSARIGVSSRGF) directs the protein to the mitochondrion. Threonine 37 is modified (phosphothreonine). Positions 37–201 (TDITSAAPGV…TGAEVILGQI (165 aa)) constitute a Thioredoxin domain. The Cysteine sulfenic acid (-SOH) intermediate role is filled by cysteine 89. Phosphoserine is present on serine 149.

The protein belongs to the peroxiredoxin family. Prx5 subfamily. As to quaternary structure, monomer. In terms of tissue distribution, expressed in the whole plant.

It is found in the mitochondrion matrix. It catalyses the reaction [glutaredoxin]-dithiol + a hydroperoxide = [glutaredoxin]-disulfide + an alcohol + H2O. Functionally, thiol-specific peroxidase that catalyzes the reduction of hydrogen peroxide and organic hydroperoxides to water and alcohols, respectively. Plays a role in cell protection against oxidative stress by detoxifying peroxides. Reduces preferentially hydrogen peroxide rather than alkyl peroxides. May be involved in mitochondrial redox homeostasis. This is Peroxiredoxin-2F, mitochondrial (PRXIIF) from Arabidopsis thaliana (Mouse-ear cress).